Consider the following 894-residue polypeptide: Microsomal triglyceride transfer protein large subunit (894 aa).

The first 18 residues, 1 to 18, serve as a signal peptide directing secretion; the sequence is MILLAVLFLCFISSYSAS. In terms of domain architecture, Vitellogenin spans 28 to 659; it reads LNNDRLYKLT…IFQYIGKAGL (632 aa). Cys174 and Cys194 are joined by a disulfide.

Heterodimer; heterodimerizes with the protein disulfide isomerase (P4HB/PDI). Interacts with APOB. Interacts with PRAP1. Liver and small intestine. Also found in ovary, testis and kidney.

Its subcellular location is the endoplasmic reticulum. It localises to the golgi apparatus. It carries out the reaction a 1,2-diacyl-sn-glycero-3-phosphocholine(in) = a 1,2-diacyl-sn-glycero-3-phosphocholine(out). It catalyses the reaction a 1,2-diacyl-sn-glycero-3-phosphoethanolamine(in) = a 1,2-diacyl-sn-glycero-3-phosphoethanolamine(out). The enzyme catalyses a cholesterol ester(in) = a cholesterol ester(out). The catalysed reaction is a triacyl-sn-glycerol(in) = a triacyl-sn-glycerol(out). Its function is as follows. Catalyzes the transport of triglyceride, cholesteryl ester, and phospholipid between phospholipid surfaces. Required for the assembly and secretion of plasma lipoproteins that contain apolipoprotein B. May be involved in regulating cholesteryl ester biosynthesis in cells that produce lipoproteins. The protein is Microsomal triglyceride transfer protein large subunit (MTTP) of Homo sapiens (Human).